Here is a 332-residue protein sequence, read N- to C-terminus: Cilia- and flagella-associated protein 119 (332 aa).

Over residues 1–10 the composition is skewed to polar residues; sequence MITPRSSQSL. Disordered regions lie at residues 1–70, 246–271, and 308–332; these read MITP…ANLF, EDEEATVEQAATPQEEEPEAVTEAEQ, and RLSNRLAALERPYQTPPSKGKSKAK. The segment covering 14-30 has biased composition (basic and acidic residues); sequence VQTELEHSPKLQEEPDR. Residues 49-58 show a composition bias toward polar residues; it reads ESPAEATSSP. Positions 287 to 308 form a coiled coil; that stretch reads LNKELRQLQQLVEERLKESEER.

Specifically expressed in testis (at protein level).

The protein localises to the cell projection. It localises to the cilium. The protein resides in the flagellum. It is found in the cytoplasmic vesicle. Its subcellular location is the secretory vesicle. The protein localises to the acrosome. It localises to the cytoplasm. The polypeptide is Cilia- and flagella-associated protein 119 (Rattus norvegicus (Rat)).